Reading from the N-terminus, the 342-residue chain is S-adenosylmethionine:tRNA ribosyltransferase-isomerase (342 aa).

The protein belongs to the QueA family. Monomer.

It is found in the cytoplasm. The catalysed reaction is 7-aminomethyl-7-carbaguanosine(34) in tRNA + S-adenosyl-L-methionine = epoxyqueuosine(34) in tRNA + adenine + L-methionine + 2 H(+). Its pathway is tRNA modification; tRNA-queuosine biosynthesis. Transfers and isomerizes the ribose moiety from AdoMet to the 7-aminomethyl group of 7-deazaguanine (preQ1-tRNA) to give epoxyqueuosine (oQ-tRNA). The polypeptide is S-adenosylmethionine:tRNA ribosyltransferase-isomerase (Listeria welshimeri serovar 6b (strain ATCC 35897 / DSM 20650 / CCUG 15529 / CIP 8149 / NCTC 11857 / SLCC 5334 / V8)).